The sequence spans 283 residues: Adenylate kinase 2, chloroplastic (283 aa).

Residues 1–59 (MTGCVNSISPPPVTLYRHRASPSRSSFSLSGDALHSLYRHRRVSRSPSIIAPKFQIVAA) constitute a chloroplast transit peptide. ATP is bound at residue 74-79 (ASGKGT). The segment at 94–123 (SAGDLLRAEIASGSENGRRAKEHMEKGQLV) is NMP. Residues R100, 121 to 123 (QLV), 150 to 153 (GYPR), and Q157 each bind AMP. Residues 187 to 220 (GRRLDPVTGKIYHLKYSPPETEEIAVRLTQRFDD) form an LID region. R188 lines the ATP pocket. Residues R217 and R228 each coordinate AMP.

It belongs to the adenylate kinase family. As to quaternary structure, monomer.

The protein resides in the plastid. The protein localises to the chloroplast stroma. It carries out the reaction AMP + ATP = 2 ADP. Functionally, catalyzes the reversible transfer of the terminal phosphate group between ATP and AMP. Plays an important role in cellular energy homeostasis and in adenine nucleotide metabolism. Plays a major role in the equilibration of adenylates and de novo synthesis of ADP in the plastid stroma. This is Adenylate kinase 2, chloroplastic from Arabidopsis thaliana (Mouse-ear cress).